The following is a 454-amino-acid chain: Pyrimidine/purine nucleotide 5'-monophosphate nucleosidase (454 aa).

This sequence belongs to the LOG family.

It carries out the reaction a pyrimidine ribonucleoside 5'-phosphate + H2O = a pyrimidine nucleobase + D-ribose 5-phosphate. The catalysed reaction is AMP + H2O = adenine + D-ribose 5-phosphate. The enzyme catalyses GMP + H2O = guanine + D-ribose 5-phosphate. It catalyses the reaction CMP + H2O = cytosine + D-ribose 5-phosphate. It carries out the reaction IMP + H2O = hypoxanthine + D-ribose 5-phosphate. The catalysed reaction is UMP + H2O = D-ribose 5-phosphate + uracil. The enzyme catalyses dTMP + H2O = 2-deoxy-D-ribose 5-phosphate + thymine. Functionally, catalyzes the hydrolysis of the N-glycosidic bond of diverse pyrimidine and purine nucleotide 5'-monophosphates, to form ribose 5-phosphate and the corresponding free base. Can use AMP, GMP, IMP, CMP, dTMP and UMP as substrates. Cannot catalyze the reverse reactions. May contribute to nucleoside pool homeostasis by degrading excess nucleotides and feeding back the ribose moiety to catabolism. The protein is Pyrimidine/purine nucleotide 5'-monophosphate nucleosidase of Escherichia coli O157:H7.